The sequence spans 417 residues: WAT1-related protein At3g02690, chloroplastic (417 aa).

The N-terminal 68 residues, 1–68 (MEWPWSAIAA…RRINGDSVVR (68 aa)), are a transit peptide targeting the chloroplast. The interval 67–92 (VRRSTTSNNSTEETESSSSSSSVDCV) is disordered. Over residues 68-89 (RRSTTSNNSTEETESSSSSSSV) the composition is skewed to low complexity. The next 10 membrane-spanning stretches (helical) occupy residues 122–142 (FLEW…MVAM), 152–172 (FFVA…FAVY), 183–203 (AWFS…GFLA), 213–233 (LGSV…SFLF), 237–257 (IGIV…LLEV), 269–289 (LWGS…IGTV), 301–321 (IMAT…ISVI), 339–359 (VIAL…VYFY), 369–389 (LSSL…LYLN), and 392–412 (FSSL…LVNF). 2 consecutive EamA domains span residues 133-255 (FFWG…LLLL) and 283-411 (SMAI…YLVN).

This sequence belongs to the drug/metabolite transporter (DMT) superfamily. Plant drug/metabolite exporter (P-DME) (TC 2.A.7.4) family.

The protein localises to the plastid. The protein resides in the chloroplast membrane. This is WAT1-related protein At3g02690, chloroplastic from Arabidopsis thaliana (Mouse-ear cress).